The following is a 186-amino-acid chain: UPF0398 protein LCA_0919 (186 aa).

The protein belongs to the UPF0398 family.

This is UPF0398 protein LCA_0919 from Latilactobacillus sakei subsp. sakei (strain 23K) (Lactobacillus sakei subsp. sakei).